The chain runs to 240 residues: tRNA (guanine-N(7)-)-methyltransferase (240 aa).

A compositionally biased stretch (polar residues) spans 1–10; the sequence is MTESQDTPIT. The segment at 1 to 20 is disordered; the sequence is MTESQDTPITTDGEARPHRR. The S-adenosyl-L-methionine site is built by E70, E95, D122, and D145. D145 is a catalytic residue. Residues K149, D181, and 218-221 each bind substrate; that span reads TKFE.

It belongs to the class I-like SAM-binding methyltransferase superfamily. TrmB family.

The enzyme catalyses guanosine(46) in tRNA + S-adenosyl-L-methionine = N(7)-methylguanosine(46) in tRNA + S-adenosyl-L-homocysteine. It functions in the pathway tRNA modification; N(7)-methylguanine-tRNA biosynthesis. Its function is as follows. Catalyzes the formation of N(7)-methylguanine at position 46 (m7G46) in tRNA. This is tRNA (guanine-N(7)-)-methyltransferase from Pseudomonas putida (strain W619).